The chain runs to 206 residues: Somatotropin (206 aa).

The signal sequence occupies residues 1 to 22; sequence MAGLHFFPALLALLMASLQTHQ. 2 disulfide bridges follow: Cys75–Cys179 and Cys196–Cys204.

It belongs to the somatotropin/prolactin family.

It is found in the secreted. In terms of biological role, growth hormone plays an important role in growth control and is involved in the regulation of several anabolic processes. Implicated as an osmoregulatory substance important for seawater adaptation. This is Somatotropin (gh) from Protopterus annectens (African lungfish).